The chain runs to 233 residues: MKRIFIVALLFATCLVNAKPSINDADIKREPEPNVAVPPCGDCYQQVGNTCVRVPSLCPSRKREPEPNVAVPPCGDCYQQVGNTCVRVPSLCPSRKREPEPNVAVPPCGDCYQQVGNTCVRVPSLCPSRKREPEPNVAVPPCGDCYQQVGNTCVRVPSLCPSRKREPEPNVAVPPCGDCYQQVGNTCVRVPSLCPSRKREPEPNVAVPPCGDCYQQVGNTCVRVPSLCPSRKR.

Residues 1–18 (MKRIFIVALLFATCLVNA) form the signal peptide. Propeptides lie at residues 19–29 (KPSINDADIKR) and 30–33 (EPEP). Pro39 is subject to Hydroxyproline. Cystine bridges form between Cys40/Cys51 and Cys43/Cys58. 2 propeptides span residues 61-63 (RKR) and 64-67 (EPEP). Residue Pro73 is modified to Hydroxyproline. Cystine bridges form between Cys74/Cys85 and Cys77/Cys92. 2 consecutive propeptides follow at residues 95–97 (RKR) and 98–101 (EPEP). A Hydroxyproline modification is found at Pro107. 2 disulfide bridges follow: Cys108/Cys119 and Cys111/Cys126. Propeptides lie at residues 129 to 131 (RKR) and 132 to 135 (EPEP). Pro141 is modified (hydroxyproline). 2 disulfide bridges follow: Cys142/Cys153 and Cys145/Cys160. 2 consecutive propeptides follow at residues 163–165 (RKR) and 166–169 (EPEP). Pro175 is subject to Hydroxyproline. Disulfide bonds link Cys176–Cys187 and Cys179–Cys194. Propeptides lie at residues 197-199 (RKR) and 200-203 (EPEP). A Hydroxyproline modification is found at Pro209. 2 disulfides stabilise this stretch: Cys210-Cys221 and Cys213-Cys228. Residues 231-233 (RKR) constitute a propeptide that is removed on maturation.

This sequence belongs to the sea anemone BBH family. Post-translationally, each Am I peptide may contain 2 disulfide bonds. The precursor protein seems to be processed in the following sequence: release of the signal peptide and of the propeptide, production of six identical 34-residue peptides by cleavage between Arg and Glu, release of four N-terminal and three C-terminal residues from each peptide and hydroxylation of each Pro in position 6 of the resulting 27-residue peptides.

The protein resides in the secreted. It localises to the nematocyst. Its function is as follows. May inhibit voltage-gated sodium channels (Nav). The chain is Delta-actitoxin-Amc1a from Antheopsis maculata (Sea anemone).